The following is a 471-amino-acid chain: Thymidine phosphorylase (471 aa).

Positions 1–10 (MAAPGTPPPS) are enriched in pro residues. The tract at residues 1 to 21 (MAAPGTPPPSASGGGGGEPRQ) is disordered. At threonine 6 the chain carries Phosphothreonine. The substrate site is built by histidine 102, arginine 188, serine 203, and lysine 207.

Belongs to the thymidine/pyrimidine-nucleoside phosphorylase family. Homodimer.

The enzyme catalyses thymidine + phosphate = 2-deoxy-alpha-D-ribose 1-phosphate + thymine. It functions in the pathway pyrimidine metabolism; dTMP biosynthesis via salvage pathway; dTMP from thymine: step 1/2. Catalyzes the reversible phosphorolysis of thymidine. The produced molecules are then utilized as carbon and energy sources or in the rescue of pyrimidine bases for nucleotide synthesis. This is Thymidine phosphorylase (Tymp) from Mus musculus (Mouse).